A 1092-amino-acid chain; its full sequence is Probable cellulose synthase A catalytic subunit 5 [UDP-forming] (1092 aa).

The Cytoplasmic portion of the chain corresponds to 1–279 (MEASAGLVAG…SSSLVNPYRM (279 aa)). The Zn(2+) site is built by Cys39, Cys42, Cys58, Cys61, Cys66, Cys69, Cys81, and Cys84. An RING-type; degenerate zinc finger spans residues 39–85 (CQICGDDVGLTPDGEPFVACNECAFPVCRDCYEYERREGTQNCPQCK). A helical transmembrane segment spans residues 280 to 300 (IIIIRLVVLGFFFHYRVMHPV). The Extracellular portion of the chain corresponds to 301–302 (PD). A helical membrane pass occupies residues 303–323 (AFALWLISVICEIWFAMSWIL). Residues 324-868 (DQFPKWFPIE…CLERFSYINS (545 aa)) are Cytoplasmic-facing. Residues Ser362, Lys368, Glu369, and Asp398 each coordinate UDP-alpha-D-glucose. Asp398 is a catalytic residue. Residues 450–479 (NFVRERRAMKREYEEFKVRINALVAKAQKV) are a coiled coil. Lys539 contacts UDP-alpha-D-glucose. The Mn(2+) site is built by Lys540 and Asp564. Residue Asp792 is part of the active site. The helical transmembrane segment at 869-889 (IVYPWTSIPLLAYCTLPAICL) threads the bilayer. Residues 890–901 (LTGKFITPELTN) lie on the Extracellular side of the membrane. A helical membrane pass occupies residues 902–922 (IASLWFMSLFICIFATGILEM). The Cytoplasmic portion of the chain corresponds to 923–938 (RWSGVGIDDWWRNEQF). A helical membrane pass occupies residues 939-959 (WVIGGVSSHLFAVFQGLLKVI). Residues 960 to 987 (AGIDTSFTVTSKGGDDEEFSELYTFKWT) lie on the Extracellular side of the membrane. A helical transmembrane segment spans residues 988 to 1008 (TLLIPPTTLLLLNFIGVVAGV). Residues 1009–1019 (SNAINNGYESW) are Cytoplasmic-facing. Residues 1020–1040 (GPLFGKLFFAFWVIVHLYPFL) form a helical membrane-spanning segment. Residues 1041 to 1049 (KGLVGRQNR) lie on the Extracellular side of the membrane. A helical transmembrane segment spans residues 1050–1070 (TPTIVIVWSILLASIFSLLWV). Over 1071-1092 (RIDPFLAKNDGPLLEECGLDCN) the chain is Cytoplasmic.

Belongs to the glycosyltransferase 2 family. Plant cellulose synthase subfamily. Mn(2+) is required as a cofactor. Requires Zn(2+) as cofactor.

The protein localises to the cell membrane. It carries out the reaction [(1-&gt;4)-beta-D-glucosyl](n) + UDP-alpha-D-glucose = [(1-&gt;4)-beta-D-glucosyl](n+1) + UDP + H(+). The protein operates within glycan metabolism; plant cellulose biosynthesis. Functionally, probable catalytic subunit of cellulose synthase terminal complexes ('rosettes'), required for beta-1,4-glucan microfibril crystallization, a major mechanism of the cell wall formation. In Oryza sativa subsp. indica (Rice), this protein is Probable cellulose synthase A catalytic subunit 5 [UDP-forming] (CESA5).